Here is a 465-residue protein sequence, read N- to C-terminus: Coumaroyl-CoA:anthocyanidin 3-O-glucoside-6''-O-coumaroyltransferase 2 (465 aa).

The residue at position 1 (Met1) is an N-acetylmethionine. Residues His173 and Asp406 each act as proton acceptor in the active site.

The protein belongs to the plant acyltransferase family. As to expression, highly expressed in flowers, and leaves. Lower levels of expression in stems, roots and siliques.

Functionally, involved in the acylation of the 6'' position of the 3-O-glucose residue of anthocyanin. Also able to use flavonol 3-glucosides as the acyl acceptor. The polypeptide is Coumaroyl-CoA:anthocyanidin 3-O-glucoside-6''-O-coumaroyltransferase 2 (3AT2) (Arabidopsis thaliana (Mouse-ear cress)).